Reading from the N-terminus, the 340-residue chain is Glyceraldehyde-3-phosphate dehydrogenase, cytosolic (340 aa).

Residues 16–17, Asp38, and Arg85 each bind NAD(+); that span reads RI. D-glyceraldehyde 3-phosphate-binding positions include 156-158, Thr187, 216-217, and Arg239; these read SCT and TG. Cys157 acts as the Nucleophile in catalysis. Residue Asn321 participates in NAD(+) binding.

It belongs to the glyceraldehyde-3-phosphate dehydrogenase family. As to quaternary structure, homotetramer.

It is found in the cytoplasm. It catalyses the reaction D-glyceraldehyde 3-phosphate + phosphate + NAD(+) = (2R)-3-phospho-glyceroyl phosphate + NADH + H(+). The protein operates within carbohydrate degradation; glycolysis; pyruvate from D-glyceraldehyde 3-phosphate: step 1/5. Functionally, key enzyme in glycolysis that catalyzes the first step of the pathway by converting D-glyceraldehyde 3-phosphate (G3P) into 3-phospho-D-glyceroyl phosphate. Essential for the maintenance of cellular ATP levels and carbohydrate metabolism. The sequence is that of Glyceraldehyde-3-phosphate dehydrogenase, cytosolic (GAPC) from Pinus sylvestris (Scotch pine).